The primary structure comprises 1245 residues: Prospore membrane adapter protein SPO71 (1245 aa).

Residues 207–270 form a disordered region; that stretch reads LHEEDQENTN…DFNYNREPSE (64 aa). The segment covering 227 to 247 has biased composition (basic and acidic residues); the sequence is KRKDLGESKSISRKDYSHFDR. A PxP motif is present at residues 385–399; the sequence is INILPPWPTELTEEE. The PH domain maps to 1030–1229; the sequence is LIQKGPLYQK…WVMSIYYELE (200 aa). Residues 1154–1192 are disordered; sequence KKGNEKQYTQDYGRQDNNIDPPSAPEADLNNSNVPSNTD. 2 stretches are compositionally biased toward polar residues: residues 1159 to 1173 and 1182 to 1191; these read KQYT…NNID and LNNSNVPSNT.

Belongs to the SPO71 family. As to quaternary structure, interacts (via PxP motif) with VPS13 (via SHR-BD domain); during prospore membrane formation.

It is found in the prospore membrane. Functionally, recruits the lipid transfer protein VPS13 to the prospore membrane during sporulation, thereby aiding prospore membrane formation. This chain is Prospore membrane adapter protein SPO71 (SPO71), found in Saccharomyces cerevisiae (strain ATCC 204508 / S288c) (Baker's yeast).